Consider the following 238-residue polypeptide: Probable septum site-determining protein MinC (238 aa).

The protein belongs to the MinC family. In terms of assembly, interacts with MinD and FtsZ.

Functionally, cell division inhibitor that blocks the formation of polar Z ring septums. Rapidly oscillates between the poles of the cell to destabilize FtsZ filaments that have formed before they mature into polar Z rings. Prevents FtsZ polymerization. The chain is Probable septum site-determining protein MinC from Blochmanniella floridana.